A 396-amino-acid polypeptide reads, in one-letter code: Acetate kinase (396 aa).

A Mg(2+)-binding site is contributed by asparagine 7. Lysine 14 contacts ATP. Arginine 91 contributes to the substrate binding site. Aspartate 148 (proton donor/acceptor) is an active-site residue. ATP-binding positions include 208-212 (HLGNG), 283-285 (DFR), and 331-335 (GIGEN). Glutamate 384 is a Mg(2+) binding site.

This sequence belongs to the acetokinase family. Homodimer. Mg(2+) serves as cofactor. Mn(2+) is required as a cofactor.

It is found in the cytoplasm. It carries out the reaction acetate + ATP = acetyl phosphate + ADP. The protein operates within metabolic intermediate biosynthesis; acetyl-CoA biosynthesis; acetyl-CoA from acetate: step 1/2. In terms of biological role, catalyzes the formation of acetyl phosphate from acetate and ATP. Can also catalyze the reverse reaction. This Desulforamulus reducens (strain ATCC BAA-1160 / DSM 100696 / MI-1) (Desulfotomaculum reducens) protein is Acetate kinase.